A 1371-amino-acid polypeptide reads, in one-letter code: Probable serine/threonine-protein kinase DDB_G0293292 (1371 aa).

Protein kinase domains lie at 9–269 (NKIL…HPNT) and 1131–1371 (FKEV…QPTL). ATP is bound by residues 15–23 (IDDGNTKRK) and Lys39. The active-site Proton acceptor is Asp143.

Belongs to the protein kinase superfamily. Ser/Thr protein kinase family.

It catalyses the reaction L-seryl-[protein] + ATP = O-phospho-L-seryl-[protein] + ADP + H(+). The catalysed reaction is L-threonyl-[protein] + ATP = O-phospho-L-threonyl-[protein] + ADP + H(+). The polypeptide is Probable serine/threonine-protein kinase DDB_G0293292 (Dictyostelium discoideum (Social amoeba)).